The chain runs to 601 residues: Glutamine--tRNA ligase (601 aa).

Positions 76–86 (PEPNGYLHIGH) match the 'HIGH' region motif. ATP is bound by residues 77–79 (EPN) and 83–89 (HIGHAKS). D109 and Y253 together coordinate L-glutamine. ATP is bound by residues T272, 301 to 302 (RL), and 309 to 311 (MSK). The 'KMSKS' region signature appears at 308 to 312 (VMSKR).

Belongs to the class-I aminoacyl-tRNA synthetase family. As to quaternary structure, monomer.

The protein localises to the cytoplasm. It carries out the reaction tRNA(Gln) + L-glutamine + ATP = L-glutaminyl-tRNA(Gln) + AMP + diphosphate. The polypeptide is Glutamine--tRNA ligase (Rhodopirellula baltica (strain DSM 10527 / NCIMB 13988 / SH1)).